The following is a 449-amino-acid chain: MKSYEVNFDGLVGPTHNYGGLSYGNVASQSNSQQASNPREAARQGLAKMKALADMGFKQGVLAPQERPDVAALRRLGFSGSDADVIQRAAREAMPLLVASCSASSMWVANAATVSPSADTADGRVHFTAANLNCKYHRSIEHPTTSRVLGAMFNNEKHFAHHAALPAVAQFGDEGAANHTRFCRAYGEAGVEFFVYGRSAFDSRYPAPQKYPARQTLEASQAVARLHGLSDDGVVYAQQNPAVIDQGVFHNDVISVGNGEVLFYHEEAFLETDAVLGQLRAKLASKGGNFQAICVPRAAVAVEDAVRSYLFNSQLLSRDDGSMLLVVPEECRNNERVWAYLGQLTSQGGPVKEVKVFDLKQSMQNGGGPACLRLRVALKEAELAAVNQGVIMTAPLYDTLLQWVDRHYRDRLGEADLADPQLLVECRTALDELTQILKLGSVYPFQRQP.

Substrate contacts are provided by residues 19-28, Asn-110, and 137-138; these read GGLSYGNVAS and HR. Positions 23–43 are disordered; that stretch reads YGNVASQSNSQQASNPREAAR. Low complexity predominate over residues 27-37; that stretch reads ASQSNSQQASN. Glu-174 is a catalytic residue. A substrate-binding site is contributed by Arg-214. His-250 is a catalytic residue. The substrate site is built by Asp-252 and Asn-365. Cys-371 (nucleophile) is an active-site residue.

The protein belongs to the succinylarginine dihydrolase family. In terms of assembly, homodimer.

It carries out the reaction N(2)-succinyl-L-arginine + 2 H2O + 2 H(+) = N(2)-succinyl-L-ornithine + 2 NH4(+) + CO2. Its pathway is amino-acid degradation; L-arginine degradation via AST pathway; L-glutamate and succinate from L-arginine: step 2/5. Catalyzes the hydrolysis of N(2)-succinylarginine into N(2)-succinylornithine, ammonia and CO(2). In Pseudomonas putida (strain ATCC 700007 / DSM 6899 / JCM 31910 / BCRC 17059 / LMG 24140 / F1), this protein is N-succinylarginine dihydrolase.